Here is a 249-residue protein sequence, read N- to C-terminus: MVDIKPEQTQEGNNNDHLVQSDDPEHPANLIPELCRKFYSLGWVTGTGGGTSIRRGEHIFIAPSGVQKELIKPNEIFVLSYPTPKYPPSARKYIRKPSALNPSACTPLFLAAFDRGAGCCIHTHSQWAVMVTLLVEREKGKSGCFEISNIEQIKGIPRGKGKGMLGFFDTLKIPIIENTAFEEDLTESLEKAMEEYPDTYAVLVRRHGIYVWGDTPAKAKTQCESLDYLFQLAVQMHAHSLPWVVNESA.

The segment at 1-25 (MVDIKPEQTQEGNNNDHLVQSDDPE) is disordered. Residues 9–18 (TQEGNNNDHL) show a composition bias toward polar residues. Residue C105 participates in substrate binding. Positions 122 and 124 each coordinate Zn(2+). The Proton donor/acceptor role is filled by E151. H207 is a Zn(2+) binding site.

This sequence belongs to the aldolase class II family. MtnB subfamily. Zn(2+) is required as a cofactor.

It localises to the cytoplasm. It carries out the reaction 5-(methylsulfanyl)-D-ribulose 1-phosphate = 5-methylsulfanyl-2,3-dioxopentyl phosphate + H2O. It functions in the pathway amino-acid biosynthesis; L-methionine biosynthesis via salvage pathway; L-methionine from S-methyl-5-thio-alpha-D-ribose 1-phosphate: step 2/6. Catalyzes the dehydration of methylthioribulose-1-phosphate (MTRu-1-P) into 2,3-diketo-5-methylthiopentyl-1-phosphate (DK-MTP-1-P). This Arthroderma otae (strain ATCC MYA-4605 / CBS 113480) (Microsporum canis) protein is Methylthioribulose-1-phosphate dehydratase.